The following is a 572-amino-acid chain: Potassium-transporting ATPase potassium-binding subunit (572 aa).

Helical transmembrane passes span I6–I26, F66–L86, A135–I155, I177–V197, T251–Y271, G283–I303, I382–F402, M428–I448, I493–L513, and F537–P557.

It belongs to the KdpA family. In terms of assembly, the system is composed of three essential subunits: KdpA, KdpB and KdpC.

It is found in the cell inner membrane. In terms of biological role, part of the high-affinity ATP-driven potassium transport (or Kdp) system, which catalyzes the hydrolysis of ATP coupled with the electrogenic transport of potassium into the cytoplasm. This subunit binds the periplasmic potassium ions and delivers the ions to the membrane domain of KdpB through an intramembrane tunnel. This Francisella philomiragia subsp. philomiragia (strain ATCC 25017 / CCUG 19701 / FSC 153 / O#319-036) protein is Potassium-transporting ATPase potassium-binding subunit.